We begin with the raw amino-acid sequence, 336 residues long: Probable deoxyhypusine synthase (336 aa).

Lys-308 acts as the Nucleophile in catalysis.

Belongs to the deoxyhypusine synthase family. Requires NAD(+) as cofactor.

It carries out the reaction [eIF5A protein]-L-lysine + spermidine = [eIF5A protein]-deoxyhypusine + propane-1,3-diamine. Its pathway is protein modification; eIF5A hypusination. In terms of biological role, catalyzes the NAD-dependent oxidative cleavage of spermidine and the subsequent transfer of the butylamine moiety of spermidine to the epsilon-amino group of a specific lysine residue of the eIF-5A precursor protein to form the intermediate deoxyhypusine residue. In Pyrococcus furiosus (strain ATCC 43587 / DSM 3638 / JCM 8422 / Vc1), this protein is Probable deoxyhypusine synthase.